The chain runs to 394 residues: 1-deoxy-D-xylulose 5-phosphate reductoisomerase (394 aa).

Residues Thr11, Gly12, Ser13, Ile14, Gly37, Asn39, and Asn126 each coordinate NADPH. 1-deoxy-D-xylulose 5-phosphate is bound at residue Lys127. Glu128 provides a ligand contact to NADPH. Residue Asp152 coordinates Mn(2+). 1-deoxy-D-xylulose 5-phosphate-binding residues include Ser153, Glu154, Ser178, and His201. Glu154 is a binding site for Mn(2+). Gly207 serves as a coordination point for NADPH. Ser214, Asn219, Lys220, and Glu223 together coordinate 1-deoxy-D-xylulose 5-phosphate. Glu223 serves as a coordination point for Mn(2+).

The protein belongs to the DXR family. The cofactor is Mg(2+). Mn(2+) serves as cofactor.

The enzyme catalyses 2-C-methyl-D-erythritol 4-phosphate + NADP(+) = 1-deoxy-D-xylulose 5-phosphate + NADPH + H(+). Its pathway is isoprenoid biosynthesis; isopentenyl diphosphate biosynthesis via DXP pathway; isopentenyl diphosphate from 1-deoxy-D-xylulose 5-phosphate: step 1/6. Functionally, catalyzes the NADPH-dependent rearrangement and reduction of 1-deoxy-D-xylulose-5-phosphate (DXP) to 2-C-methyl-D-erythritol 4-phosphate (MEP). The sequence is that of 1-deoxy-D-xylulose 5-phosphate reductoisomerase from Synechocystis sp. (strain ATCC 27184 / PCC 6803 / Kazusa).